Reading from the N-terminus, the 889-residue chain is A disintegrin and metalloproteinase with thrombospondin motifs 8 (889 aa).

Positions 1–26 are cleaved as a signal peptide; the sequence is MLPAPAAPRWPPLLLLLLLLLPLARG. Residues 27–213 constitute a propeptide that is removed on maturation; sequence APARPAAGGQ…PLGATSRTKR (187 aa). Positions 138 to 210 are disordered; it reads QGAGGSLAQP…PPPPLGATSR (73 aa). Positions 173–183 are enriched in basic and acidic residues; it reads EGQRQERGDHQ. A compositionally biased stretch (acidic residues) spans 184-197; that stretch reads EDSEEESQEEEAEG. The 211-residue stretch at 219–429 folds into the Peptidase M12B domain; the sequence is RFVETLLVAD…GHGDCLLDAP (211 aa). 11 disulfide bridges follow: Cys-294-Cys-347, Cys-323-Cys-329, Cys-341-Cys-424, Cys-379-Cys-408, Cys-452-Cys-477, Cys-463-Cys-486, Cys-472-Cys-507, Cys-501-Cys-512, Cys-538-Cys-575, Cys-542-Cys-580, and Cys-553-Cys-565. Asn-344 is a glycosylation site (N-linked (GlcNAc...) asparagine). His-363 serves as a coordination point for Zn(2+). Residue Glu-364 is part of the active site. Zn(2+)-binding residues include His-367 and His-373. N-linked (GlcNAc...) asparagine glycans are attached at residues Asn-400, Asn-465, and Asn-490. A Disintegrin domain is found at 438 to 525; sequence GLPGRMALYQ…EEVERPKPVA (88 aa). The region spanning 526-581 is the TSP type-1 1 domain; sequence DGGWAPWGPWGECSRTCGGGVQFSHRECKDPEPQNGGRYCLGRRAKYQSCHTEECP. Residue Asn-599 is glycosylated (N-linked (GlcNAc...) asparagine). The interval 690 to 831 is spacer; it reads RKVSGSLTPT…RATTNIIQPL (142 aa). The TSP type-1 2 domain occupies 833-888; it reads HAQWVLGDWSECSSTCGAGWQRRTVECRDPSGQASATCNKALKPEDAKPCESQLCP.

The cofactor is Zn(2+). The precursor is cleaved by a furin endopeptidase. Post-translationally, glycosylated. Can be O-fucosylated by POFUT2 on a serine or a threonine residue found within the consensus sequence C1-X(2)-(S/T)-C2-G of the TSP type-1 repeat domains where C1 and C2 are the first and second cysteine residue of the repeat, respectively. Fucosylated repeats can then be further glycosylated by the addition of a beta-1,3-glucose residue by the glucosyltransferase, B3GALTL. Fucosylation mediates the efficient secretion of ADAMTS family members. Can also be C-glycosylated with one or two mannose molecules on tryptophan residues within the consensus sequence W-X-X-W of the TPRs, and N-glycosylated. These other glycosylations can also facilitate secretion. In terms of tissue distribution, highly expressed in adult and fetal lung, lower expression in brain, placenta, heart, stomach and fetal brain and kidney.

Its subcellular location is the secreted. The protein resides in the extracellular space. It localises to the extracellular matrix. Functionally, has anti-angiogenic properties. This is A disintegrin and metalloproteinase with thrombospondin motifs 8 (ADAMTS8) from Homo sapiens (Human).